The chain runs to 168 residues: MPTLLLGASIPFGTIAYTLFIFLLLLVMLRKFAWGPLMGIMKEREEHVANEIDAAERNNAEAKKLVEEQREMLKQSRVEAQELIERAKKQAVDQKDVIVAAAKEEAESIKASAVQEIQREKEQAIAALQEQVASLSVQIASKVIEKELKEEDQVKLIRDYIKEVGEAR.

A helical membrane pass occupies residues 9-29; it reads SIPFGTIAYTLFIFLLLLVML.

It belongs to the ATPase B chain family. As to quaternary structure, F-type ATPases have 2 components, F(1) - the catalytic core - and F(0) - the membrane proton channel. F(1) has five subunits: alpha(3), beta(3), gamma(1), delta(1), epsilon(1). F(0) has three main subunits: a(1), b(2) and c(10-14). The alpha and beta chains form an alternating ring which encloses part of the gamma chain. F(1) is attached to F(0) by a central stalk formed by the gamma and epsilon chains, while a peripheral stalk is formed by the delta and b chains.

Its subcellular location is the cell membrane. F(1)F(0) ATP synthase produces ATP from ADP in the presence of a proton or sodium gradient. F-type ATPases consist of two structural domains, F(1) containing the extramembraneous catalytic core and F(0) containing the membrane proton channel, linked together by a central stalk and a peripheral stalk. During catalysis, ATP synthesis in the catalytic domain of F(1) is coupled via a rotary mechanism of the central stalk subunits to proton translocation. Its function is as follows. Component of the F(0) channel, it forms part of the peripheral stalk, linking F(1) to F(0). In Bacillus cereus (strain B4264), this protein is ATP synthase subunit b.